The primary structure comprises 539 residues: CTP synthase (539 aa).

Residues 1–268 (MADTKYIFVT…DETVLRKVGL (268 aa)) are amidoligase domain. Residue Ser15 coordinates CTP. Residue Ser15 coordinates UTP. An ATP-binding site is contributed by 16–21 (SLGKGI). Residue Tyr56 participates in L-glutamine binding. Asp73 provides a ligand contact to ATP. Asp73 and Glu143 together coordinate Mg(2+). Residues 150–152 (DIE), 189–194 (KTKPTQ), and Lys225 contribute to the CTP site. UTP contacts are provided by residues 189–194 (KTKPTQ) and Lys225. The Glutamine amidotransferase type-1 domain occupies 294–536 (TIALVGKYVE…IREAIKTRKK (243 aa)). Gly356 serves as a coordination point for L-glutamine. The active-site Nucleophile; for glutamine hydrolysis is the Cys383. Residues 384–387 (LGMQ), Glu407, and Arg464 contribute to the L-glutamine site. Residues His509 and Glu511 contribute to the active site.

The protein belongs to the CTP synthase family. In terms of assembly, homotetramer.

It carries out the reaction UTP + L-glutamine + ATP + H2O = CTP + L-glutamate + ADP + phosphate + 2 H(+). It catalyses the reaction L-glutamine + H2O = L-glutamate + NH4(+). The enzyme catalyses UTP + NH4(+) + ATP = CTP + ADP + phosphate + 2 H(+). It participates in pyrimidine metabolism; CTP biosynthesis via de novo pathway; CTP from UDP: step 2/2. Its activity is regulated as follows. Allosterically activated by GTP, when glutamine is the substrate; GTP has no effect on the reaction when ammonia is the substrate. The allosteric effector GTP functions by stabilizing the protein conformation that binds the tetrahedral intermediate(s) formed during glutamine hydrolysis. Inhibited by the product CTP, via allosteric rather than competitive inhibition. Catalyzes the ATP-dependent amination of UTP to CTP with either L-glutamine or ammonia as the source of nitrogen. Regulates intracellular CTP levels through interactions with the four ribonucleotide triphosphates. The sequence is that of CTP synthase from Porphyromonas gingivalis (strain ATCC 33277 / DSM 20709 / CIP 103683 / JCM 12257 / NCTC 11834 / 2561).